We begin with the raw amino-acid sequence, 266 residues long: Type III pantothenate kinase (266 aa).

An ATP-binding site is contributed by 6–13 (DIGNSRIK). Substrate contacts are provided by residues tyrosine 94 and 101 to 104 (GIDR). Catalysis depends on aspartate 103, which acts as the Proton acceptor. Residue aspartate 128 participates in K(+) binding. Threonine 131 contacts ATP. Threonine 183 lines the substrate pocket.

It belongs to the type III pantothenate kinase family. As to quaternary structure, homodimer. NH4(+) is required as a cofactor. Requires K(+) as cofactor.

The protein localises to the cytoplasm. The enzyme catalyses (R)-pantothenate + ATP = (R)-4'-phosphopantothenate + ADP + H(+). The protein operates within cofactor biosynthesis; coenzyme A biosynthesis; CoA from (R)-pantothenate: step 1/5. Catalyzes the phosphorylation of pantothenate (Pan), the first step in CoA biosynthesis. The polypeptide is Type III pantothenate kinase (Nitrosococcus oceani (strain ATCC 19707 / BCRC 17464 / JCM 30415 / NCIMB 11848 / C-107)).